A 462-amino-acid polypeptide reads, in one-letter code: Spermatogenesis- and oogenesis-specific basic helix-loop-helix-containing protein 2 (462 aa).

Residues 200 to 251 (KASFLHSSKEKLRRERIKFCCEQLRTLLPYVKGRKSDVASVIEATVDYVKQV) form the bHLH domain. Positions 422–462 (PASSRTASSSIFRGFRESDSGHQASQQPTGPSLQPQDSSYF) are disordered. The span at 442-462 (GHQASQQPTGPSLQPQDSSYF) shows a compositional bias: polar residues.

It localises to the nucleus. Its function is as follows. Probable transcription factor, which may be involved in spermatogenesis and oogenesis. The sequence is that of Spermatogenesis- and oogenesis-specific basic helix-loop-helix-containing protein 2 (Sohlh2) from Rattus norvegicus (Rat).